Reading from the N-terminus, the 203-residue chain is Apoptosis-associated speck-like protein containing a CARD (203 aa).

The Pyrin domain occupies 1–91 (MAESFKEHLQ…DDLLRNTGQS (91 aa)). The CARD domain maps to 112 to 203 (VAFSKVNFID…FLMDDLEDAE (92 aa)).

Self-associates (via pyrin and CARD domains). Interacts (via pyrin domain) with caspa (via pyrin domain). Interacts with caspb; the interaction only occurs in the presence of nlrp1. Component of NLRP1 inflammasomes. Inflammasomes are supramolecular complexes that assemble in the cytosol in response to pathogens and other damage-associated signals and play critical roles in innate immunity and inflammation. The NLRP1 inflammasome is composed of the signal sensor nlrp1, and the adapter pycard (asc), which recruit effector pro-inflammatory caspases caspa and/or caspb. The interaction between nlrp1 and pycard is required for the sequential recruitment of caspa and then caspb. Within the complex caspa is preferentially recruited first and this causes the cleavage of pro-il1b into the midformed il1b. This is followed by the recruitment of caspb, which is activated and cleaves the midformed il1b resulting in il1b maturation. Interacts (via pyrin domain) with NLP3X1 (via pyrin domain). Interacts with gbp4. As to expression, expressed in the kidney, intestine and gill. Expressed at low levels in the heart.

The protein localises to the cytoplasm. It localises to the inflammasome. Its function is as follows. Functions as a key mediator in apoptosis and inflammation. Promotes caspase-mediated apoptosis. Induces proteolytic processing of caspa and caspa-dependent apoptosis. Involved in innate immune response by acting as an integral adapter in the assembly of various inflammasomes which recruit and activate caspase-1 leading to processing and secretion of pro-inflammatory cytokines. Caspase-1-dependent inflammation leads to macrophage pyroptosis, a form of cell death. The function as activating adapter in different types of inflammasomes is mediated by the pyrin and CARD domains and their homotypic interactions. Clustered PYCARD nucleates the formation of caspase-1 filaments through the interaction of their respective CARD domains, acting as a platform for of caspase-1 polymerization. Also involved in transcriptional activation of cytokines and chemokines independent of the inflammasome. This Danio rerio (Zebrafish) protein is Apoptosis-associated speck-like protein containing a CARD (pycard).